Consider the following 308-residue polypeptide: Tetraacyldisaccharide 4'-kinase (308 aa).

Position 63-70 (Ser63–Thr70) interacts with ATP.

This sequence belongs to the LpxK family.

It catalyses the reaction a lipid A disaccharide + ATP = a lipid IVA + ADP + H(+). The protein operates within glycolipid biosynthesis; lipid IV(A) biosynthesis; lipid IV(A) from (3R)-3-hydroxytetradecanoyl-[acyl-carrier-protein] and UDP-N-acetyl-alpha-D-glucosamine: step 6/6. In terms of biological role, transfers the gamma-phosphate of ATP to the 4'-position of a tetraacyldisaccharide 1-phosphate intermediate (termed DS-1-P) to form tetraacyldisaccharide 1,4'-bis-phosphate (lipid IVA). The polypeptide is Tetraacyldisaccharide 4'-kinase (Campylobacter jejuni (strain RM1221)).